Here is a 215-residue protein sequence, read N- to C-terminus: tRNA (guanine-N(7)-)-methyltransferase (215 aa).

Positions 44, 69, 96, and 118 each coordinate S-adenosyl-L-methionine. Asp118 is an active-site residue. Substrate is bound by residues Lys122, Asp154, and 192–195 (TEYE).

Belongs to the class I-like SAM-binding methyltransferase superfamily. TrmB family.

It carries out the reaction guanosine(46) in tRNA + S-adenosyl-L-methionine = N(7)-methylguanosine(46) in tRNA + S-adenosyl-L-homocysteine. It functions in the pathway tRNA modification; N(7)-methylguanine-tRNA biosynthesis. Functionally, catalyzes the formation of N(7)-methylguanine at position 46 (m7G46) in tRNA. The protein is tRNA (guanine-N(7)-)-methyltransferase of Levilactobacillus brevis (strain ATCC 367 / BCRC 12310 / CIP 105137 / JCM 1170 / LMG 11437 / NCIMB 947 / NCTC 947) (Lactobacillus brevis).